We begin with the raw amino-acid sequence, 238 residues long: Formate dehydrogenase, cytochrome b556 subunit (238 aa).

The heme b site is built by His-23 and His-62. The next 4 membrane-spanning stretches (helical) occupy residues 23–43 (HWML…FFFP), 60–80 (AIHP…ALLY), 120–140 (MLFW…IIMW), and 155–175 (IAIL…LVHI). Heme b-binding residues include His-160 and His-174.

It belongs to the formate dehydrogenase gamma subunit family. As to quaternary structure, formate dehydrogenase is a membrane-bound complex, formed by subunits alpha, beta and gamma. It depends on heme as a cofactor.

It is found in the cell membrane. Its function is as follows. Allows to use formate as major electron donor during anaerobic respiration. Subunit gamma is probably the cytochrome b556(FDO) component of the formate dehydrogenase. The protein is Formate dehydrogenase, cytochrome b556 subunit (fdxI) of Haemophilus influenzae (strain ATCC 51907 / DSM 11121 / KW20 / Rd).